The following is a 191-amino-acid chain: Potassium-transporting ATPase KdpC subunit (191 aa).

A helical membrane pass occupies residues 10–30 (ITLVFCVFFSVFYILVLWLFA).

Belongs to the KdpC family. In terms of assembly, the system is composed of three essential subunits: KdpA, KdpB and KdpC.

The protein localises to the cell inner membrane. Part of the high-affinity ATP-driven potassium transport (or Kdp) system, which catalyzes the hydrolysis of ATP coupled with the electrogenic transport of potassium into the cytoplasm. This subunit acts as a catalytic chaperone that increases the ATP-binding affinity of the ATP-hydrolyzing subunit KdpB by the formation of a transient KdpB/KdpC/ATP ternary complex. The sequence is that of Potassium-transporting ATPase KdpC subunit from Bacteroides fragilis (strain ATCC 25285 / DSM 2151 / CCUG 4856 / JCM 11019 / LMG 10263 / NCTC 9343 / Onslow / VPI 2553 / EN-2).